A 120-amino-acid chain; its full sequence is Large ribosomal subunit protein bL19 (120 aa).

The protein belongs to the bacterial ribosomal protein bL19 family.

Its function is as follows. This protein is located at the 30S-50S ribosomal subunit interface and may play a role in the structure and function of the aminoacyl-tRNA binding site. The sequence is that of Large ribosomal subunit protein bL19 from Acaryochloris marina (strain MBIC 11017).